The chain runs to 520 residues: Cyclic GMP-AMP synthase-like receptor (520 aa).

ATP contacts are provided by residues Ser-68 and 80-82 (EFD). Residues Glu-80, Asp-82, and Asp-198 each contribute to the Mg(2+) site. GTP is bound at residue Asp-198. Lys-264 contacts ATP. Positions 288 and 294 each coordinate Mn(2+).

This sequence belongs to the mab-21 family. It depends on Mg(2+) as a cofactor. Requires Mn(2+) as cofactor.

The enzyme catalyses GTP + ATP = 2',3'-cGAMP + 2 diphosphate. It carries out the reaction GTP + ATP = pppGp(2'-5')A + diphosphate. It catalyses the reaction pppGp(2'-5')A = 2',3'-cGAMP + diphosphate. Its function is as follows. Nucleotidyltransferase that catalyzes the formation of cyclic GMP-AMP (2',3'-cGAMP) from ATP and GTP and plays a key role in innate immunity. Acts as a key sensor of double-stranded RNA (dsRNA), the presence of dsRNA in the cytoplasm being a danger signal that triggers the immune responses. Directly binds dsRNA, activating the nucleotidyltransferase activity, leading to synthesis of 2',3'-cGAMP, a second messenger that binds to and activates Sting, thereby triggering the immune response via activation of the NF-kappa-B transcription factor. The sequence is that of Cyclic GMP-AMP synthase-like receptor from Microplitis demolitor (Parasitoid wasp).